The chain runs to 204 residues: Rho GDP-dissociation inhibitor 1 (204 aa).

Positions 1–36 (MAEQEPTAEQLAQIAAENEEDEHSVNYKPPAQKSIQ) are disordered. Alanine 2 is subject to N-acetylalanine. Position 34 is a phosphoserine (serine 34). An N6-acetyllysine modification is found at lysine 43. Serine 47 carries the post-translational modification Phosphoserine. An N6-acetyllysine mark is found at lysine 105 and lysine 127. Residues lysine 138 and lysine 141 each participate in a glycyl lysine isopeptide (Lys-Gly) (interchain with G-Cter in SUMO1); alternate cross-link. Glycyl lysine isopeptide (Lys-Gly) (interchain with G-Cter in SUMO2); alternate cross-links involve residues lysine 138 and lysine 141. Lysine 141 is modified (N6-acetyllysine; alternate). An N6-succinyllysine; alternate modification is found at lysine 141. An N6-acetyllysine modification is found at lysine 178.

Belongs to the Rho GDI family. Monomer. Interacts with FER. Interacts with PLXNB3. Forms a heterodimer with RAC1. Interacts with RHOA, the affinity is increased by three orders of magnitude when RHOA is prenylated. Interacts with PSMD10; the interaction increases ARHGDIA association with RHOA, leading to ARHGDIA-mediated inactivation of RHOA and ROCK and prolonged AKT activation. Interacts with KANK2; the interaction is direct and may regulate the interaction of ARHGDIA with RHOA, RAC1 and CDC42. Interacts with RHOC. Interacts with CDC42. Interacts with NGFR (via death domain); NGFR binding decreases the affinity for RHOA.

It is found in the cytoplasm. Controls Rho proteins homeostasis. Regulates the GDP/GTP exchange reaction of the Rho proteins by inhibiting the dissociation of GDP from them, and the subsequent binding of GTP to them. Retains Rho proteins such as CDC42, RAC1 and RHOA in an inactive cytosolic pool, regulating their stability and protecting them from degradation. Actively involved in the recycling and distribution of activated Rho GTPases in the cell, mediates extraction from membranes of both inactive and activated molecules due its exceptionally high affinity for prenylated forms. Through the modulation of Rho proteins, may play a role in cell motility regulation. In glioma cells, inhibits cell migration and invasion by mediating the signals of SEMA5A and PLXNB3 that lead to inactivation of RAC1. This is Rho GDP-dissociation inhibitor 1 (ARHGDIA) from Homo sapiens (Human).